We begin with the raw amino-acid sequence, 307 residues long: uncharacterized protein (307 aa).

This is an uncharacterized protein from Bacillus subtilis (strain 168).